Here is a 506-residue protein sequence, read N- to C-terminus: Putative amidase (506 aa).

Active-site charge relay system residues include Lys-121 and Ser-196. Ser-220 (acyl-ester intermediate) is an active-site residue.

Belongs to the amidase family.

It catalyses the reaction a monocarboxylic acid amide + H2O = a monocarboxylate + NH4(+). The chain is Putative amidase from Synechocystis sp. (strain ATCC 27184 / PCC 6803 / Kazusa).